The chain runs to 711 residues: Interferon-induced GTP-binding protein Mx2 (711 aa).

2 disordered regions span residues 1–26 (MPKPRMSWPYQRHRQASSPPHPHKEM) and 62–88 (MLTLSPQQPGGKSGQQTSKGPENNLYS). The span at 66-82 (SPQQPGGKSGQQTSKGP) shows a compositional bias: low complexity. The region spanning 112–383 (DLALPTIAVI…LIGHISKSLP (272 aa)) is the Dynamin-type G domain. The segment at 122-129 (GDQSSGKS) is G1 motif. GTP is bound at residue 122 to 129 (GDQSSGKS). The tract at residues 147–149 (ITR) is G2 motif. Residues 221 to 224 (DLPG) form a G3 motif region. Residues 221–225 (DLPGI) and 290–293 (TKPD) contribute to the GTP site. The tract at residues 290–293 (TKPD) is G4 motif. The interval 322–325 (KCRG) is G5 motif. The 92-residue stretch at 619–710 (ITEIGVHVNA…TLSKFAQSLQ (92 aa)) folds into the GED domain.

Belongs to the TRAFAC class dynamin-like GTPase superfamily. Dynamin/Fzo/YdjA family. In terms of tissue distribution, ubiquitous.

It localises to the cytoplasm. The protein localises to the nucleus. In terms of biological role, interferon-induced dynamin-like GTPase with antiviral activity against influenza virus A (FLUAV). The sequence is that of Interferon-induced GTP-binding protein Mx2 (MX2) from Sus scrofa (Pig).